We begin with the raw amino-acid sequence, 118 residues long: Small ribosomal subunit protein bS6 (118 aa).

Residues 98–118 (TAAPAAKVAPVETAPAAEAAE) form a disordered region. The segment covering 99–118 (AAPAAKVAPVETAPAAEAAE) has biased composition (low complexity).

It belongs to the bacterial ribosomal protein bS6 family.

Binds together with bS18 to 16S ribosomal RNA. The polypeptide is Small ribosomal subunit protein bS6 (Geobacter metallireducens (strain ATCC 53774 / DSM 7210 / GS-15)).